Here is a 636-residue protein sequence, read N- to C-terminus: Protein meg-1 (636 aa).

Composition is skewed to polar residues over residues 1–13, 38–54, and 292–355; these read MDNRGHFSSNGNF, SSGNMRSIGGSAQNQQQ, and LSMN…QYNH. 4 disordered regions span residues 1–54, 289–367, 484–504, and 521–542; these read MDNR…NQQQ, LFNL…APHL, SDVAREDASTSQPSKSRSMYI, and LDSSQSHAGPVPAASTKPKTPS. S574 is modified (phosphoserine; by mbk-2). The tract at residues 591 to 636 is disordered; it reads MSQSFLHQQDDEAPDCTKNVHSESDLKQAEPQESDKQSDKELPSNE. A compositionally biased stretch (basic and acidic residues) spans 608-636; the sequence is KNVHSESDLKQAEPQESDKQSDKELPSNE.

Interacts with pptr-1, pptr-2 and pgl-1. Phosphorylated by mbk-2, which promotes the disassembly of zygotic P granules in the anterior cytoplasm of pre-gastrulation embryos. Dephosphorylated by a phosphatase complex containing the PP2A regulatory subunit pptr-1, which promotes the assembly and accumulation of zygotic P granules in the posterior cytoplasm of pre-gastrulation embryos. In terms of tissue distribution, not expressed in the adult germline or in any somatic tissues.

The protein resides in the cytoplasmic granule. Its function is as follows. P granule component, which acts redundantly with P granule component meg-2 to promote P granule segregation during embryogenesis, and germ cell proliferation and differentiation in larval stages. In its phosphorylated form, and together with meg-2, promotes the disassembly of zygotic P granules in the anterior cytoplasm of pre-gastrulation embryos. In its dephosphorylated form, and together with meg-2, promotes the assembly and accumulation of zygotic P granules in the posterior cytoplasm of pre-gastrulation embryos. May function with the nanos family members nos-2 and nos-3 to promote germ cell proliferation during larval development. Required for fertility. This Caenorhabditis elegans protein is Protein meg-1.